The chain runs to 901 residues: Protein translocase subunit SecA (901 aa).

ATP contacts are provided by residues glutamine 87, 105 to 109, and aspartate 512; that span reads GEGKT. The disordered stretch occupies residues 859-901; that stretch reads HQDDDSAAAAALAAQTGERKVGRNDPCPCGSGKKYKQCHGRLQ. Zn(2+)-binding residues include cysteine 885, cysteine 887, cysteine 896, and histidine 897. A compositionally biased stretch (basic residues) spans 891–901; it reads KKYKQCHGRLQ.

The protein belongs to the SecA family. In terms of assembly, monomer and homodimer. Part of the essential Sec protein translocation apparatus which comprises SecA, SecYEG and auxiliary proteins SecDF-YajC and YidC. Zn(2+) is required as a cofactor.

It is found in the cell inner membrane. The protein localises to the cytoplasm. The catalysed reaction is ATP + H2O + cellular proteinSide 1 = ADP + phosphate + cellular proteinSide 2.. Its function is as follows. Part of the Sec protein translocase complex. Interacts with the SecYEG preprotein conducting channel. Has a central role in coupling the hydrolysis of ATP to the transfer of proteins into and across the cell membrane, serving both as a receptor for the preprotein-SecB complex and as an ATP-driven molecular motor driving the stepwise translocation of polypeptide chains across the membrane. The polypeptide is Protein translocase subunit SecA (Escherichia coli O157:H7).